Consider the following 803-residue polypeptide: Protein AMEIOTIC 1 homolog (803 aa).

Disordered stretches follow at residues 21 to 64 (RPQV…QSLS) and 264 to 333 (RLRQ…RWSA). The segment covering 39-50 (NGKDDANHDESK) has biased composition (basic and acidic residues). Over residues 51-64 (NQSPGLPLSRQSLS) the composition is skewed to polar residues. Residues 283 to 295 (KREEAESSMDKSR) show a composition bias toward basic and acidic residues. The span at 296-313 (AARKKKAKTYKSPKKVEK) shows a compositional bias: basic residues. Positions 314–333 (RRVVEAKDGDPRRGKDRWSA) are enriched in basic and acidic residues. The stretch at 450-567 (VKKKVEELAE…SSFLSLKEQL (118 aa)) forms a coiled coil. A disordered region spans residues 651 to 688 (ISGGGSSSCPVASGPEQLPRSSSCPSIGPGGLPPSSRA).

Its subcellular location is the nucleus. It is found in the chromosome. Its function is as follows. Plays a fundamental role in building the proper chromosome structure at the beginning of meiosis in male meiocytes. Required for the transition from leptotene to zygotene in meiocytes. Required for homologous chromosome pairing. In Oryza sativa subsp. japonica (Rice), this protein is Protein AMEIOTIC 1 homolog.